A 151-amino-acid chain; its full sequence is Odorant-binding protein (151 aa).

2 disulfide bridges follow: Cys38/Cys42 and Cys57/Cys149.

The protein belongs to the calycin superfamily. Lipocalin family. In terms of tissue distribution, expressed in salivary glands, hair and urine.

Its subcellular location is the secreted. In terms of biological role, may act as a pheromone. In Phodopus sungorus (Striped hairy-footed hamster), this protein is Odorant-binding protein.